We begin with the raw amino-acid sequence, 131 residues long: Probable ATP synthase subunit g 1, mitochondrial (131 aa).

This sequence belongs to the ATPase g subunit family. As to quaternary structure, subunit of the F-type ATPase which has 2 components, CF(1) - the catalytic core - and CF(0) - the membrane proton channel.

The protein resides in the mitochondrion membrane. In terms of biological role, mitochondrial membrane ATP synthase (F(1)F(0) ATP synthase or Complex V) produces ATP from ADP in the presence of a proton gradient across the membrane which is generated by electron transport complexes of the respiratory chain. F-type ATPases consist of two structural domains, F(1) - containing the extramembraneous catalytic core, and F(0) - containing the membrane proton channel, linked together by a central stalk and a peripheral stalk. During catalysis, ATP synthesis in the catalytic domain of F(1) is coupled via a rotary mechanism of the central stalk subunits to proton translocation. Part of the complex F(0) domain. Minor subunit located with subunit a in the membrane. In Caenorhabditis elegans, this protein is Probable ATP synthase subunit g 1, mitochondrial.